A 690-amino-acid chain; its full sequence is UvrABC system protein B (690 aa).

Residues 39–422 (EGLDDGLSFQ…EQQHAGQVVE (384 aa)) form the Helicase ATP-binding domain. An ATP-binding site is contributed by 52–59 (GVTGSGKT). Positions 105–128 (YYDYYQPEAYVPSRDLFIEKDSSI) match the Beta-hairpin motif. The 154-residue stretch at 443 to 596 (QVDDLLAEIG…QIAFNLEHGI (154 aa)) folds into the Helicase C-terminal domain. One can recognise a UVR domain in the interval 640–675 (AREIKRLEKSMMECAKNLEFEKAAAARDDLFRLRER).

The protein belongs to the UvrB family. In terms of assembly, forms a heterotetramer with UvrA during the search for lesions. Interacts with UvrC in an incision complex.

Its subcellular location is the cytoplasm. Its function is as follows. The UvrABC repair system catalyzes the recognition and processing of DNA lesions. A damage recognition complex composed of 2 UvrA and 2 UvrB subunits scans DNA for abnormalities. Upon binding of the UvrA(2)B(2) complex to a putative damaged site, the DNA wraps around one UvrB monomer. DNA wrap is dependent on ATP binding by UvrB and probably causes local melting of the DNA helix, facilitating insertion of UvrB beta-hairpin between the DNA strands. Then UvrB probes one DNA strand for the presence of a lesion. If a lesion is found the UvrA subunits dissociate and the UvrB-DNA preincision complex is formed. This complex is subsequently bound by UvrC and the second UvrB is released. If no lesion is found, the DNA wraps around the other UvrB subunit that will check the other stand for damage. This chain is UvrABC system protein B, found in Dechloromonas aromatica (strain RCB).